A 2063-amino-acid polypeptide reads, in one-letter code: Nuclear receptor coactivator 6 (2063 aa).

Positions 1–928 (MVLDDLPNLE…PPRKKKNSQQ (928 aa)) are TBP/GTF2A-binding region. A CREBBP-binding region region spans residues 1–1057 (MVLDDLPNLE…LPVSQNVHPP (1057 aa)). An NCOA1-binding region region spans residues 1 to 1310 (MVLDDLPNLE…QTHKLDSVVV (1310 aa)). Asymmetric dimethylarginine is present on R95. Disordered regions lie at residues 184-251 (IPPG…VNRQ), 281-549 (QQQQ…APQL), and 789-811 (RPPGPSPHMAQQHGDPATTANND). Low complexity predominate over residues 281–300 (QQQQQLQARPPQQHQQQQPQ). Polar residues-rich tracts occupy residues 353–368 (MQQQLQARPSLATVQT), 379–406 (GSQQASQAHTNFPQMSNPGQFTAPQMKS), 417–453 (PLQQPHLTNKSPASSPSSFQQGSPASSPTVNQTQQQM), 462–502 (PLPQ…QGPQ), and 522–549 (GQANPNFMQGQVPSTTATTPGNSGAPQL). The segment at 773-927 (VNNSPSQVMG…KPPRKKKNSQ (155 aa)) is NCOA6IP-binding region. S884 carries the post-translational modification Phosphoserine; by MAPK; in vitro. The LXXLL motif 1 signature appears at 887–891 (LVNLL). 3 disordered regions span residues 899–1278 (HFGV…LNPT), 1310–1353 (VNSG…KAPK), and 1448–1474 (EVKMVVPEDQSKKDGQPSDPNKLPSVE). Residues 903–912 (NNKQNNTNAN) show a composition bias toward low complexity. Basic residues predominate over residues 913–925 (KPKKKKPPRKKKN). The span at 982-992 (PLQQMPPQLMQ) shows a compositional bias: low complexity. Positions 995 to 1020 (APPPQPPQQQPQPQLPQQQQPPPPSQ) are enriched in pro residues. The segment covering 1021 to 1041 (PQSQQQQQQQQQMMMMLMMQQ) has biased composition (low complexity). An asymmetric dimethylarginine mark is found at R1047 and R1058. Positions 1063-1075 (PDSQRMPMQQSGS) are enriched in polar residues. R1096 carries the asymmetric dimethylarginine modification. 3 stretches are compositionally biased toward polar residues: residues 1104-1125 (PLGSNSRKMVYQESPQNPSSSP), 1173-1191 (LSATQGATPQQPPVNSLPS), and 1202-1214 (APTQTSRPKTPNR). Residues 1219 to 1232 (PYYPQTPNNRPPST) are compositionally biased toward pro residues. Residues 1310-1320 (VNSGKQSNSGA) are compositionally biased toward polar residues. The segment covering 1322–1345 (KRASPSNSRRSSPGSSRKTTPSPG) has biased composition (low complexity). The LXXLL motif 2 motif lies at 1491–1495 (LSQLL). The EP300/CRSP3-binding region stretch occupies residues 1641-2063 (SEGQSAAQSN…AVQSKRRKSK (423 aa)). The interval 1738 to 1820 (ATPVQLPSPP…VSSSKGKGKV (83 aa)) is disordered. Residues 1750-1763 (SSPVVPSHPPVQQV) are compositionally biased toward low complexity. Over residues 1773 to 1798 (PQVNTSADQNTLPSSQSTTMVSPLLT) the composition is skewed to polar residues. Residues 1799 to 1815 (NSPGSSGNRRSPVSSSK) show a composition bias toward low complexity. N6-acetyllysine occurs at positions 1819 and 1822. Disordered stretches follow at residues 1837–1908 (GSLE…LPGG) and 1995–2063 (IVSG…RKSK). Positions 2002-2011 (EPKEIVEKSK) are enriched in basic and acidic residues. At S2018 the chain carries Phosphoserine.

As to quaternary structure, monomer and homodimer. Interacts with RBM39. Interacts in vitro with the basal transcription factors GTF2A and TBP, suggesting an autonomous transactivation function. Interacts with NCOA1, CRSP3, RBM14, the histone acetyltransferases EP300 and CREBBP, and with the methyltransferases NCOA6IP and PRMT2/HRMT1L1. Component of the MLL2/3 complex (also named ASCOM complex), at least composed of KMT2D/MLL2 or KMT2C/MLL3, ASH2L, RBBP5, WDR5, NCOA6, DPY30, KDM6A, PAXIP1/PTIP, PAGR1 and alpha- and beta-tubulin. Interacts with ZNF335; may enhance ligand-dependent transcriptional activation by nuclear hormone receptors. Post-translationally, phosphorylated by PRKDC. In terms of processing, phosphorylation on Ser-884 leads to a strong decrease in binding to ESR1 and ESR2. As to expression, ubiquitous. Highly expressed in brain, prostate, testis and ovary; weakly expressed in lung, thymus and small intestine.

It is found in the nucleus. Functionally, nuclear receptor coactivator that directly binds nuclear receptors and stimulates the transcriptional activities in a hormone-dependent fashion. Coactivates expression in an agonist- and AF2-dependent manner. Involved in the coactivation of different nuclear receptors, such as for steroids (GR and ERs), retinoids (RARs and RXRs), thyroid hormone (TRs), vitamin D3 (VDR) and prostanoids (PPARs). Probably functions as a general coactivator, rather than just a nuclear receptor coactivator. May also be involved in the coactivation of the NF-kappa-B pathway. May coactivate expression via a remodeling of chromatin and its interaction with histone acetyltransferase proteins. This is Nuclear receptor coactivator 6 (NCOA6) from Homo sapiens (Human).